Here is a 273-residue protein sequence, read N- to C-terminus: DNA repair protein RecO (273 aa).

The interval 249-273 (GRSLTEEPELKAEQTEAEKESQRPR) is disordered. Positions 252–273 (LTEEPELKAEQTEAEKESQRPR) are enriched in basic and acidic residues.

It belongs to the RecO family.

In terms of biological role, involved in DNA repair and RecF pathway recombination. This Heliobacterium modesticaldum (strain ATCC 51547 / Ice1) protein is DNA repair protein RecO.